A 2090-amino-acid polypeptide reads, in one-letter code: Nuclear pore complex protein Nup205 (2090 aa).

The protein belongs to the NUP186/NUP192/NUP205 family. Part of the nuclear pore complex (NPC).

The protein resides in the nucleus. It is found in the nuclear pore complex. Plays a role in the nuclear pore complex (NPC) assembly and maintenance, but with limited role in NPC permeability. Required for specific nuclear import pathways such as Mad import. The protein is Nuclear pore complex protein Nup205 of Drosophila melanogaster (Fruit fly).